We begin with the raw amino-acid sequence, 377 residues long: Nitric oxide reductase FlRd-NAD(+) reductase (377 aa).

Belongs to the FAD-dependent oxidoreductase family. FAD serves as cofactor.

The protein localises to the cytoplasm. The catalysed reaction is 2 reduced [nitric oxide reductase rubredoxin domain] + NAD(+) + H(+) = 2 oxidized [nitric oxide reductase rubredoxin domain] + NADH. It functions in the pathway nitrogen metabolism; nitric oxide reduction. In terms of biological role, one of at least two accessory proteins for anaerobic nitric oxide (NO) reductase. Reduces the rubredoxin moiety of NO reductase. The polypeptide is Nitric oxide reductase FlRd-NAD(+) reductase (Salmonella schwarzengrund (strain CVM19633)).